Consider the following 804-residue polypeptide: Endoplasmin (804 aa).

The first 21 residues, 1-21 (MRALWVLGLCCVLLTFGSVRA), serve as a signal peptide directing secretion. An SRT pseudosubstrate motif motif is present at residues 42–44 (SRT). N-linked (GlcNAc...) asparagine glycosylation is present at Asn-62. Ser-64 carries the post-translational modification Phosphoserine. N-linked (GlcNAc...) asparagine glycosylation is present at Asn-107. Residues Asn-107, Asp-149, and Asn-162 each contribute to the ATP site. Residue Lys-168 is modified to N6-(2-hydroxyisobutyryl)lysine. Ser-172 carries the post-translational modification Phosphoserine. Phe-199 serves as a coordination point for ATP. N-linked (GlcNAc...) asparagine glycosylation is present at Asn-217. The disordered stretch occupies residues 288–323 (TVEEPMEEEEAAKEEKEESDDEAAVEEEEEEKKPKT). Residues 289-317 (VEEPMEEEEAAKEEKEESDDEAAVEEEEE) are compositionally biased toward acidic residues. A phosphoserine mark is found at Ser-306 and Ser-403. The residue at position 404 (Lys-404) is an N6-succinyllysine. Asn-445 carries N-linked (GlcNAc...) asparagine glycosylation. The residue at position 447 (Ser-447) is a Phosphoserine. N6-acetyllysine is present on Lys-479. N-linked (GlcNAc...) asparagine glycans are attached at residues Asn-481 and Asn-502. Lys-633 bears the N6-succinyllysine mark. A disordered region spans residues 750-804 (DPDAKVEEEPEEEPEETTEDTTEDTEQDEDEEMDVGTDEEEQETAKESTAEKDEL). Acidic residues predominate over residues 757–791 (EEPEEEPEETTEDTTEDTEQDEDEEMDVGTDEEEQ). A Phosphothreonine modification is found at Thr-786. The span at 792–804 (ETAKESTAEKDEL) shows a compositional bias: basic and acidic residues. A Prevents secretion from ER motif is present at residues 801–804 (KDEL).

This sequence belongs to the heat shock protein 90 family. Homodimer; disulfide-linked. Component of an EIF2 complex at least composed of CELF1/CUGBP1, CALR, CALR3, EIF2S1, EIF2S2, HSP90B1 and HSPA5. Part of a large chaperone multiprotein complex comprising DNAJB11, HSP90B1, HSPA5, HYOU, PDIA2, PDIA4, PDIA6, PPIB, SDF2L1, UGGT1 and very small amounts of ERP29, but not, or at very low levels, CALR nor CANX. Interacts with AIMP1; regulates its retention in the endoplasmic reticulum. Hyperglycosylated form interacts with OS9; promoting its degradation by the endoplasmic reticulum associated degradation (ERAD). Interacts with CNPY3. This interaction is disrupted in the presence of ATP. Interacts with TLR4 and TLR9, but not with TLR3. Interacts with MZB1 in a calcium-dependent manner. Interacts with METTL23. Interacts with IL1B; the interaction facilitates cargo translocation into the ERGIC. Interacts with EIF2AK3. Phosphorylated by CK2. Post-translationally, N-glycosylated cotranslationally at Asn-217 by STT3A-containing OST-A complex: this glycosylation is constitutive. In response to various stress, 5 additional facultative sites (Asn-62, Asn-107, Asn-445, Asn-481 and Asn-502) can be glycosylated post-translationally by STT3B-containing OST-B complex, leading to a hyperglycosylated form that is degraded by the ER-associated degradation (ERAD) pathway. In normal conditions, the OST-A complex together with CCDC134 prevent glycosylation at facultative sites during protein folding, thereby preventing hyperglycosylation. Mechanistically, nascent HSP90B1 is tethered during translation to a specialized CCDC134-containing translocon that forms a microenvironment for its folding, in which STT3A associates with the SRT pseudosubstrate motif, and prevents access to facultative glycosylation sites until folding is completed, rendering its facultative sites inaccessible to the OST-B complex.

The protein localises to the endoplasmic reticulum lumen. Its subcellular location is the sarcoplasmic reticulum lumen. It localises to the melanosome. The catalysed reaction is ATP + H2O = ADP + phosphate + H(+). Its function is as follows. ATP-dependent chaperone involved in the processing of proteins in the endoplasmic reticulum, regulating their transport. Together with MESD, acts as a modulator of the Wnt pathway by promoting the folding of LRP6, a coreceptor of the canonical Wnt pathway. When associated with CNPY3, required for proper folding of Toll-like receptors. Promotes folding and trafficking of TLR4 to the cell surface. May participate in the unfolding of cytosolic leaderless cargos (lacking the secretion signal sequence) such as the interleukin 1/IL-1 to facilitate their translocation into the ERGIC (endoplasmic reticulum-Golgi intermediate compartment) and secretion; the translocation process is mediated by the cargo receptor TMED10. In Pongo abelii (Sumatran orangutan), this protein is Endoplasmin (HSP90B1).